Here is a 197-residue protein sequence, read N- to C-terminus: Probable nicotinate-nucleotide adenylyltransferase (197 aa).

The protein belongs to the NadD family.

The catalysed reaction is nicotinate beta-D-ribonucleotide + ATP + H(+) = deamido-NAD(+) + diphosphate. It participates in cofactor biosynthesis; NAD(+) biosynthesis; deamido-NAD(+) from nicotinate D-ribonucleotide: step 1/1. Its function is as follows. Catalyzes the reversible adenylation of nicotinate mononucleotide (NaMN) to nicotinic acid adenine dinucleotide (NaAD). This is Probable nicotinate-nucleotide adenylyltransferase from Borrelia garinii subsp. bavariensis (strain ATCC BAA-2496 / DSM 23469 / PBi) (Borreliella bavariensis).